The chain runs to 239 residues: UDP-2,3-diacylglucosamine hydrolase (239 aa).

The Mn(2+) site is built by Asp-8, His-10, Asp-41, Asn-78, and His-113. 78–79 (NR) is a substrate binding site. Substrate is bound by residues Asp-121, Ser-159, Asn-163, Lys-166, and His-194. Mn(2+) contacts are provided by His-194 and His-196.

It belongs to the LpxH family. The cofactor is Mn(2+).

It is found in the cell inner membrane. It catalyses the reaction UDP-2-N,3-O-bis[(3R)-3-hydroxytetradecanoyl]-alpha-D-glucosamine + H2O = 2-N,3-O-bis[(3R)-3-hydroxytetradecanoyl]-alpha-D-glucosaminyl 1-phosphate + UMP + 2 H(+). It functions in the pathway glycolipid biosynthesis; lipid IV(A) biosynthesis; lipid IV(A) from (3R)-3-hydroxytetradecanoyl-[acyl-carrier-protein] and UDP-N-acetyl-alpha-D-glucosamine: step 4/6. Hydrolyzes the pyrophosphate bond of UDP-2,3-diacylglucosamine to yield 2,3-diacylglucosamine 1-phosphate (lipid X) and UMP by catalyzing the attack of water at the alpha-P atom. Involved in the biosynthesis of lipid A, a phosphorylated glycolipid that anchors the lipopolysaccharide to the outer membrane of the cell. This Shewanella sp. (strain MR-7) protein is UDP-2,3-diacylglucosamine hydrolase.